Here is a 229-residue protein sequence, read N- to C-terminus: Small ribosomal subunit protein uS3 (229 aa).

In terms of domain architecture, KH type-2 spans Met39–Arg109. Residues Val210 to Ala229 are disordered.

It belongs to the universal ribosomal protein uS3 family. As to quaternary structure, part of the 30S ribosomal subunit. Forms a tight complex with proteins S10 and S14.

Its function is as follows. Binds the lower part of the 30S subunit head. Binds mRNA in the 70S ribosome, positioning it for translation. The polypeptide is Small ribosomal subunit protein uS3 (Akkermansia muciniphila (strain ATCC BAA-835 / DSM 22959 / JCM 33894 / BCRC 81048 / CCUG 64013 / CIP 107961 / Muc)).